We begin with the raw amino-acid sequence, 353 residues long: Cytochrome c biogenesis protein CcsA (353 aa).

8 helical membrane passes run 15-35, 37-57, 68-88, 97-117, 142-162, 261-281, 288-308, and 322-342; these read FAIL…PNLP, LAAL…TLLG, LSNL…VHLI, LVGV…TMTL, VMML…AFLI, IIGL…VWAN, WSWD…AAYL, and AILA…VNLL.

This sequence belongs to the CcmF/CycK/Ccl1/NrfE/CcsA family. In terms of assembly, may interact with ccs1.

The protein localises to the cellular thylakoid membrane. Functionally, required during biogenesis of c-type cytochromes (cytochrome c6 and cytochrome f) at the step of heme attachment. This Nostoc punctiforme (strain ATCC 29133 / PCC 73102) protein is Cytochrome c biogenesis protein CcsA.